A 378-amino-acid polypeptide reads, in one-letter code: MKILVDENMPYARELFSRLGEVKAVPGRPIPVAQLADADALMVRSVTKVNESLLAGKPIKFVGTATAGTDHVDEAWLKQAGIGFSAAPGCNAIAVVEYVFSSLLMLAERDGFSLHERTVGIVGVGNVGRRLQARLEALGIKTLLCDPPRADRGDEGDFRSLDELVQHADILTFHTPLFKDGPYKTLHLADEKLIRSLKPGAILINACRGAVVDNTALLTCLNEGQKLSVVLDVWEGEPELNVELLKKVDIGTPHIAGYTLEGKARGTTQVFEAYSKFIGHEQHVALDTLLPAPEFGRITLHGLLDQPTLKRLVHLVYDVRRDDAPLRKVAGIPGEFDKLRKNYLERREWSSLYVICDDASAASLLCKLGFNAVHHPAR.

Substrate-binding residues include Ser-45 and Thr-66. Positions 146 and 175 each coordinate NAD(+). The active site involves Arg-208. Asp-232 contacts NAD(+). The active site involves Glu-237. Catalysis depends on His-254, which acts as the Proton donor. Residue Gly-257 participates in NAD(+) binding. Tyr-258 is a binding site for substrate.

The protein belongs to the D-isomer specific 2-hydroxyacid dehydrogenase family. PdxB subfamily. As to quaternary structure, homodimer.

Its subcellular location is the cytoplasm. The catalysed reaction is 4-phospho-D-erythronate + NAD(+) = (R)-3-hydroxy-2-oxo-4-phosphooxybutanoate + NADH + H(+). It participates in cofactor biosynthesis; pyridoxine 5'-phosphate biosynthesis; pyridoxine 5'-phosphate from D-erythrose 4-phosphate: step 2/5. In terms of biological role, catalyzes the oxidation of erythronate-4-phosphate to 3-hydroxy-2-oxo-4-phosphonooxybutanoate. This chain is Erythronate-4-phosphate dehydrogenase, found in Escherichia fergusonii (strain ATCC 35469 / DSM 13698 / CCUG 18766 / IAM 14443 / JCM 21226 / LMG 7866 / NBRC 102419 / NCTC 12128 / CDC 0568-73).